The primary structure comprises 257 residues: MGTVRPPRPSLLLVSTRESCLFLLFCLHLGAACPQPCRCPDHAGAVAVFCSLRGLQEVPEDIPANTVLLKLDANKISHLPDGAFQHLHRLRELDLSHNAIEAIGSATFAGLAGGLRLLDLSYNRIQRIPKDALGKLSAKIRLSHNPLHCECALQEALWELKLDPDSVDEIACHTSVQEEFVGKPLVQALDAGASLCSVPHRTTDVAMLVTMFGWFAMVIAYVVYYVRHNQEDARRHLEYLKSLPSAPASKDPIGPGP.

Residues 1 to 32 (MGTVRPPRPSLLLVSTRESCLFLLFCLHLGAA) form the signal peptide. One can recognise an LRRNT domain in the interval 33–64 (CPQPCRCPDHAGAVAVFCSLRGLQEVPEDIPA). LRR repeat units follow at residues 65 to 86 (NTVLLKLDANKISHLPDGAFQH), 89 to 110 (RLRELDLSHNAIEAIGSATFAG), 114 to 135 (GLRLLDLSYNRIQRIPKDALGK), and 136 to 157 (LSAKIRLSHNPLHCECALQEAL). Residues 205 to 225 (VAMLVTMFGWFAMVIAYVVYY) traverse the membrane as a helical segment.

The protein belongs to the LRRC3 family. Widely expressed; detected in testis, lung, small intestine, breast, brain, heart, bone marrow, placenta, colon, fetal brain, liver, fetal liver, thymus, salivary gland, spinal cord, spleen, trachea and adrenal gland.

The protein localises to the membrane. The polypeptide is Leucine-rich repeat-containing protein 3 (LRRC3) (Homo sapiens (Human)).